Reading from the N-terminus, the 563-residue chain is Putative cysteine ligase BshC (563 aa).

It belongs to the BshC family.

The polypeptide is Putative cysteine ligase BshC (Chlorobium phaeobacteroides (strain BS1)).